Here is a 427-residue protein sequence, read N- to C-terminus: Inward rectifier potassium channel 2 (427 aa).

Topologically, residues 1–81 are cytoplasmic; sequence MGSVRTNRYS…IFTTCVDIRW (81 aa). Residue cysteine 76 is modified to S-nitrosocysteine. Residues 82-106 form a helical membrane-spanning segment; it reads RWMLVIFCLAFVLSWLFFGCVFWLI. Over 107–128 the chain is Extracellular; that stretch reads ALLHGDLDASKESKACVSEVNS. Residues 129-140 constitute an intramembrane region (helical; Pore-forming); it reads FTAAFLFSIETQ. The pore-forming intramembrane region spans 141-147; that stretch reads TTIGYGF. The short motif at 142–147 is the Selectivity filter element; that stretch reads TIGYGF. The Extracellular portion of the chain corresponds to 148-156; sequence RCVTDECPI. Residues 157–178 form a helical membrane-spanning segment; the sequence is AVFMVVFQSIVGCIIDAFIIGA. At 179–427 the chain is on the cytoplasmic side; that stretch reads VMAKMAKPKK…PRPLRRESEI (249 aa). Residues 181 to 208 are polyphosphoinositide (PIP2)-binding; the sequence is AKMAKPKKRNETLVFSHNAVIAMRDGKL. A disordered region spans residues 384 to 427; that stretch reads SKEEDDSENGVPESTSTDTPPDIDLHNQASVPLEPRPLRRESEI. The PDZ-binding motif lies at 425–427; the sequence is SEI.

The protein belongs to the inward rectifier-type potassium channel (TC 1.A.2.1) family. KCNJ2 subfamily. Homotetramer. Homomultimeric and heteromultimeric association with KCNJ4/Kir2.3. Can form heteromeric channels with Kir2.6/KCNJ18. Associates, via its PDZ-recognition domain, with a complex containing LIN7A, LIN7B, LIN7C, DLG1, CASK and APBA1. S-nitrosylation increases the open probability and inward rectifying currents.

Its subcellular location is the cell membrane. The protein localises to the sarcolemma. It is found in the T-tubule. The catalysed reaction is K(+)(in) = K(+)(out). Activated by phosphatidylinositol 4,5 biphosphate (PtdIns(4,5)P2). Functionally, inward rectifier potassium channels are characterized by a greater tendency to allow potassium to flow into the cell rather than out of it. Their voltage dependence is regulated by the concentration of extracellular potassium; as external potassium is raised, the voltage range of the channel opening shifts to more positive voltages. The inward rectification is mainly due to the blockage of outward current by internal magnesium. Can be blocked by extracellular barium and cesium. Probably participates in establishing action potential waveform and excitability of neuronal and muscle tissues. This chain is Inward rectifier potassium channel 2 (KCNJ2), found in Sus scrofa (Pig).